Here is a 423-residue protein sequence, read N- to C-terminus: UDP-N-acetylmuramoylalanine--D-glutamate ligase (423 aa).

Gly112–Thr118 provides a ligand contact to ATP.

Belongs to the MurCDEF family.

The protein resides in the cytoplasm. It catalyses the reaction UDP-N-acetyl-alpha-D-muramoyl-L-alanine + D-glutamate + ATP = UDP-N-acetyl-alpha-D-muramoyl-L-alanyl-D-glutamate + ADP + phosphate + H(+). It participates in cell wall biogenesis; peptidoglycan biosynthesis. Cell wall formation. Catalyzes the addition of glutamate to the nucleotide precursor UDP-N-acetylmuramoyl-L-alanine (UMA). The sequence is that of UDP-N-acetylmuramoylalanine--D-glutamate ligase from Thermosipho africanus (strain TCF52B).